Here is an 850-residue protein sequence, read N- to C-terminus: Mitogen-activated protein kinase kinase kinase 11 (850 aa).

Residue serine 11 is modified to Phosphoserine. The segment covering 18–31 (GSGSGGGGGSGGVR) has biased composition (gly residues). The interval 18–37 (GSGSGGGGGSGGVRPEGSPK) is disordered. Phosphoserine is present on serine 35. In terms of domain architecture, SH3 spans 42–106 (YANPVWTALF…PSNYVSRGGG (65 aa)). A Protein kinase domain is found at 118-380 (LRLEEVIGIG…ASILQQLEAL (263 aa)). ATP-binding positions include 124 to 132 (IGIGGFGKV) and lysine 145. Aspartate 242 acts as the Proton acceptor in catalysis. Phosphothreonine; by autocatalysis is present on threonine 278. The residue at position 282 (serine 282) is a Phosphoserine; by autocatalysis and MAP4K1. Serine 395 carries the phosphoserine modification. Leucine-zipper stretches follow at residues 404–425 (IQGL…EEEL) and 439–460 (LRRR…ELTL). 5 positions are modified to phosphoserine: serine 508, serine 525, serine 549, serine 556, and serine 557. Residues 536–850 (LEPAESGQTW…QAPWAPEAGP (315 aa)) form a disordered region. Residues 551–563 (RRLDDSSNGERRA) are compositionally biased toward basic and acidic residues. Residues 598–610 (SSPLGSPSTPPAL) are compositionally biased toward low complexity. Serine 655 is subject to Phosphoserine. Residues 677–693 (TAPPPAQMASPCPPDLP) show a composition bias toward pro residues. Threonine 712 is modified (phosphothreonine). Phosphoserine is present on residues serine 728, serine 731, serine 743, serine 751, serine 761, serine 773, serine 792, serine 796, and serine 818. Residues 790-802 (RPSPLPSPQPAPR) are compositionally biased toward pro residues. The span at 803-819 (RAPWTLFPDSDPFWDSP) shows a compositional bias: low complexity.

Belongs to the protein kinase superfamily. STE Ser/Thr protein kinase family. MAP kinase kinase kinase subfamily. As to quaternary structure, homodimer; undergoes dimerization during activation. Interacts with MAP2K4/MKK4. Interacts with MAP2K7/MKK7. Found in a complex with SH3RF1, RAC1, MAP2K7/MKK7, MAPK8IP1/JIP1 and MAPK8/JNK1. It depends on Mg(2+) as a cofactor. In terms of processing, autophosphorylation on serine and threonine residues within the activation loop plays a role in enzyme activation. Thr-278 is likely to be the main autophosphorylation site. Phosphorylation of Ser-556 and Ser-557 is induced by CDC42.

The protein resides in the cytoplasm. It localises to the cytoskeleton. Its subcellular location is the microtubule organizing center. It is found in the centrosome. The catalysed reaction is L-seryl-[protein] + ATP = O-phospho-L-seryl-[protein] + ADP + H(+). The enzyme catalyses L-threonyl-[protein] + ATP = O-phospho-L-threonyl-[protein] + ADP + H(+). Homodimerization via the leucine zipper domains is required for autophosphorylation and subsequent activation. Activates the JUN N-terminal pathway. Required for serum-stimulated cell proliferation and for mitogen and cytokine activation of MAPK14 (p38), MAPK3 (ERK) and MAPK8 (JNK1) through phosphorylation and activation of MAP2K4/MKK4 and MAP2K7/MKK7. Plays a role in mitogen-stimulated phosphorylation and activation of BRAF, but does not phosphorylate BRAF directly. Influences microtubule organization during the cell cycle. The sequence is that of Mitogen-activated protein kinase kinase kinase 11 (Map3k11) from Rattus norvegicus (Rat).